A 173-amino-acid chain; its full sequence is Mesencephalic astrocyte-derived neurotrophic factor homolog (173 aa).

The N-terminal stretch at Met-1 to Ala-22 is a signal peptide. 4 disulfides stabilise this stretch: Cys-28–Cys-114, Cys-31–Cys-103, Cys-61–Cys-72, and Cys-148–Cys-151.

The protein belongs to the ARMET family.

The protein resides in the secreted. Functionally, required during the maturation of the embryonic nervous system for maintenance of neuronal and cuticular connectivity. Essential for maintenance of dopaminergic neurons and dopamine levels. This Drosophila simulans (Fruit fly) protein is Mesencephalic astrocyte-derived neurotrophic factor homolog.